A 152-amino-acid polypeptide reads, in one-letter code: Lipoprotein signal peptidase (152 aa).

The next 3 membrane-spanning stretches (helical) occupy residues 5 to 25 (LFVL…FWIV), 61 to 81 (WFFV…LATH), and 84 to 104 (LNIW…GNFI). Catalysis depends on residues D114 and D130. A helical membrane pass occupies residues 125-145 (IFNVADSYLTVGVILLVICLW).

This sequence belongs to the peptidase A8 family.

It is found in the cell membrane. The catalysed reaction is Release of signal peptides from bacterial membrane prolipoproteins. Hydrolyzes -Xaa-Yaa-Zaa-|-(S,diacylglyceryl)Cys-, in which Xaa is hydrophobic (preferably Leu), and Yaa (Ala or Ser) and Zaa (Gly or Ala) have small, neutral side chains.. It participates in protein modification; lipoprotein biosynthesis (signal peptide cleavage). Its function is as follows. This protein specifically catalyzes the removal of signal peptides from prolipoproteins. This chain is Lipoprotein signal peptidase, found in Streptococcus pyogenes serotype M18 (strain MGAS8232).